A 453-amino-acid chain; its full sequence is UDP-glycosyltransferase 74E2 (453 aa).

His17 acts as the Proton acceptor in catalysis. His17 is a binding site for an anthocyanidin. Residue Asp109 is the Charge relay of the active site. UDP-alpha-D-glucose-binding residues include Thr131, Gln334, His349, Trp352, Asn353, Ser354, Glu357, Asp373, and Gln374.

The protein belongs to the UDP-glycosyltransferase family. In terms of tissue distribution, expressed in roots, cotyledons and leaf hydathodes.

It carries out the reaction (indol-3-yl)butanoate + UDP-alpha-D-glucose = 4-(indol-3-yl)butanoyl-beta-D-glucose + UDP. Its function is as follows. Glucosyltransferase that acts on the auxin indole-3-butyric acid (IBA). Mediates abiotic stress responses and stress-induced morphological adaptations by regulating auxin homeostasis. Possesses low activity in vitro on jasmonate (JA) and the synthetic auxin analog naphthaleneacetic acid (NAA). The sequence is that of UDP-glycosyltransferase 74E2 (UGT74E2) from Arabidopsis thaliana (Mouse-ear cress).